Reading from the N-terminus, the 330-residue chain is Anthranilate phosphoribosyltransferase (330 aa).

Residues Gly79, 82–83 (GD), Thr87, 89–92 (NIST), 107–115 (KHGNYGVSS), and Ser119 contribute to the 5-phospho-alpha-D-ribose 1-diphosphate site. Residue Gly79 participates in anthranilate binding. A Mg(2+)-binding site is contributed by Ser91. Residue Asn110 coordinates anthranilate. Residue Arg165 coordinates anthranilate. 2 residues coordinate Mg(2+): Asp223 and Glu224.

This sequence belongs to the anthranilate phosphoribosyltransferase family. As to quaternary structure, homodimer. Mg(2+) is required as a cofactor.

It catalyses the reaction N-(5-phospho-beta-D-ribosyl)anthranilate + diphosphate = 5-phospho-alpha-D-ribose 1-diphosphate + anthranilate. Its pathway is amino-acid biosynthesis; L-tryptophan biosynthesis; L-tryptophan from chorismate: step 2/5. Catalyzes the transfer of the phosphoribosyl group of 5-phosphorylribose-1-pyrophosphate (PRPP) to anthranilate to yield N-(5'-phosphoribosyl)-anthranilate (PRA). This Flavobacterium johnsoniae (strain ATCC 17061 / DSM 2064 / JCM 8514 / BCRC 14874 / CCUG 350202 / NBRC 14942 / NCIMB 11054 / UW101) (Cytophaga johnsonae) protein is Anthranilate phosphoribosyltransferase.